Consider the following 163-residue polypeptide: UPF0416 protein RBE_0909 (163 aa).

It belongs to the UPF0416 family.

This is UPF0416 protein RBE_0909 from Rickettsia bellii (strain RML369-C).